A 312-amino-acid polypeptide reads, in one-letter code: Pantothenate kinase (312 aa).

Residue Gly97–Ser104 participates in ATP binding.

The protein belongs to the prokaryotic pantothenate kinase family.

The protein resides in the cytoplasm. It carries out the reaction (R)-pantothenate + ATP = (R)-4'-phosphopantothenate + ADP + H(+). It participates in cofactor biosynthesis; coenzyme A biosynthesis; CoA from (R)-pantothenate: step 1/5. The sequence is that of Pantothenate kinase from Mycolicibacterium gilvum (strain PYR-GCK) (Mycobacterium gilvum (strain PYR-GCK)).